A 956-amino-acid polypeptide reads, in one-letter code: MAWFSGKVSLGGFPDLTGAVNKFQESVKNIEKNFDNALGFDDKSDSAAEDAASSMWPPAVDTKSLFDPVMSFMGNTSDEKPDTLEDSVRTENPSQIEQKEEEAGSVKLATEQAVSVEANKETNVRREADQADNPEVTETVVLDPKDDEPQSQILLEESSEYSLQTPESSGYKTSLQPNEKLEMTASQDSQPEQPKSEAEESQPEDSEAKEVTVENKDTVHSPVLDGQHKITYMDETTNEQEILGENLEGRTSSKNFEVSPDINHVNRIESPVAHPSLIFESDGSPYESSIPKRSSSDEISERIVDFVSREIDSRLDTSELNESQRSSSATNVSDSADVILELEKTKKEIKMLENALQGAARQAQAKADEIAKLMHENEQLKSVTEDLKRKSNEAEVESLREEYHQRVATLERKVYALTKERDTLRREQNKKSDAAALLKEKDEIINQVMAEGEELSKKQAAQEAQIRKLRAQIREAEEEKKGLITKLQSEENKVESIKRDKTATEKLLQETIEKHQAELTSQKDYYSNALAAAKEAQALAEERTNNEARSELENRLKEAGERESMLVQALEELRQTLSKKEQQAVYREDMFRGEIEDLQRRYQASERRCEELITQVPESTRPLLRQIEAMQETSYRTAEAWAAVERTLNSRLQEAESKAATAEERERSVNERLSQTLSRINVLEAQLSCLRAEQGQLSKSLEKERQRAAENRQEYLAAKEEADTLEGRANQLEVEIRELRRKHKQELQEVLLHNELIQKDLEREKASRLDLERTARINSSAVSEQLPIARQNSAFENGSLPRKLSSASSLGSMEESYFLQASLDSSDKFSEKRSMPEATMSPYYMKSITPSAYEATLRQKEGELASYMTRLASMESIRDSLAEELVKMTAECEKLRGEADRVPGIKAELEALRQRHAAALELMGERDEELEELRADIVDLKEMYREQVNMLVNKIQ.

Disordered regions lie at residues 70 to 230 (MSFM…QHKI) and 278 to 298 (IFESDGSPYESSIPKRSSSDE). 2 stretches are compositionally biased toward basic and acidic residues: residues 77–89 (SDEKPDTLEDSVR) and 118–129 (ANKETNVRREAD). 2 stretches are compositionally biased toward polar residues: residues 160 to 177 (EYSLQTPESSGYKTSLQP) and 184 to 193 (TASQDSQPEQ). The segment covering 206-219 (SEAKEVTVENKDTV) has biased composition (basic and acidic residues). Residues 333–765 (SDSADVILEL…LIQKDLEREK (433 aa)) adopt a coiled-coil conformation. Ser793 bears the Phosphoserine mark. Residues 851–951 (SAYEATLRQK…EMYREQVNML (101 aa)) are a coiled coil.

In terms of assembly, interacts with RABH1B and RABH1C, but not with RABD1 or RABD2A.

Its subcellular location is the golgi apparatus. The protein resides in the cytoplasm. Its function is as follows. Golgi matrix protein playing a role in tethering of vesicles to Golgi membranes and in maintaining the overall structure of the Golgi apparatus. This is Golgin candidate 5 (GC5) from Arabidopsis thaliana (Mouse-ear cress).